The following is a 189-amino-acid chain: Small ribosomal subunit protein uS5 (189 aa).

The S5 DRBM domain occupies 20 to 83; sequence FMDRLVHINR…ESAKRSLIRV (64 aa).

The protein belongs to the universal ribosomal protein uS5 family. In terms of assembly, part of the 30S ribosomal subunit. Contacts proteins S4 and S8.

Functionally, with S4 and S12 plays an important role in translational accuracy. Its function is as follows. Located at the back of the 30S subunit body where it stabilizes the conformation of the head with respect to the body. The sequence is that of Small ribosomal subunit protein uS5 from Methylocella silvestris (strain DSM 15510 / CIP 108128 / LMG 27833 / NCIMB 13906 / BL2).